The primary structure comprises 252 residues: Hydroxyacylglutathione hydrolase (252 aa).

Zn(2+)-binding residues include histidine 54, histidine 56, aspartate 58, histidine 59, histidine 111, aspartate 128, and histidine 166.

The protein belongs to the metallo-beta-lactamase superfamily. Glyoxalase II family. In terms of assembly, monomer. The cofactor is Zn(2+).

The catalysed reaction is an S-(2-hydroxyacyl)glutathione + H2O = a 2-hydroxy carboxylate + glutathione + H(+). The protein operates within secondary metabolite metabolism; methylglyoxal degradation; (R)-lactate from methylglyoxal: step 2/2. In terms of biological role, thiolesterase that catalyzes the hydrolysis of S-D-lactoyl-glutathione to form glutathione and D-lactic acid. The polypeptide is Hydroxyacylglutathione hydrolase (Aliivibrio fischeri (strain MJ11) (Vibrio fischeri)).